The following is a 212-amino-acid chain: External core antigen (212 aa).

A signal peptide spans 1–19 (MQLFHLCLIISCSCPTVQA). The interval 25–27 (GWL) is HBEAG. The interval 172-212 (LPETAVVRRRGRSPRRRTPSPRRRRSQSPRRRRSQSPASQC) is disordered. A compositionally biased stretch (basic residues) spans 178–205 (VRRRGRSPRRRTPSPRRRRSQSPRRRRS). Residues 184-190 (SPRRRTP) form a 1; half-length repeat. Residues 184 to 206 (SPRRRTPSPRRRRSQSPRRRRSQ) form a 3 X 8 AA repeats of S-P-R-R-R-R-S-Q region. A propeptide spanning residues 184-212 (SPRRRTPSPRRRRSQSPRRRRSQSPASQC) is cleaved from the precursor. 2 repeat units span residues 191–198 (SPRRRRSQ) and 199–206 (SPRRRRSQ).

The protein belongs to the orthohepadnavirus precore antigen family. As to quaternary structure, homodimerizes. Post-translationally, phosphorylated. Cleaved by host furin.

Its subcellular location is the secreted. The protein localises to the host nucleus. Its function is as follows. May regulate immune response to the intracellular capsid in acting as a T-cell tolerogen, by having an immunoregulatory effect which prevents destruction of infected cells by cytotoxic T-cells. This immune regulation may predispose to chronicity during perinatal infections and prevent severe liver injury during adult infections. In Gorilla gorilla (western gorilla), this protein is External core antigen.